Here is a 517-residue protein sequence, read N- to C-terminus: 2-isopropylmalate synthase (517 aa).

In terms of domain architecture, Pyruvate carboxyltransferase spans V5–Y267. The Mn(2+) site is built by D14, H202, H204, and N238. A regulatory domain region spans residues R392–N517.

It belongs to the alpha-IPM synthase/homocitrate synthase family. LeuA type 1 subfamily. Homodimer. Mn(2+) is required as a cofactor.

The protein resides in the cytoplasm. It catalyses the reaction 3-methyl-2-oxobutanoate + acetyl-CoA + H2O = (2S)-2-isopropylmalate + CoA + H(+). Its pathway is amino-acid biosynthesis; L-leucine biosynthesis; L-leucine from 3-methyl-2-oxobutanoate: step 1/4. In terms of biological role, catalyzes the condensation of the acetyl group of acetyl-CoA with 3-methyl-2-oxobutanoate (2-ketoisovalerate) to form 3-carboxy-3-hydroxy-4-methylpentanoate (2-isopropylmalate). This is 2-isopropylmalate synthase from Blochmanniella pennsylvanica (strain BPEN).